Consider the following 452-residue polypeptide: tRNA-2-methylthio-N(6)-dimethylallyladenosine synthase (452 aa).

Residues 16 to 134 (KRFFISTWGC…LPEYIERVKT (119 aa)) form the MTTase N-terminal domain. The [4Fe-4S] cluster site is built by Cys25, Cys61, Cys95, Cys171, Cys175, and Cys178. The region spanning 157 to 387 (RKSDIKAFVT…VEAVNEIMAR (231 aa)) is the Radical SAM core domain. A TRAM domain is found at 390–452 (KEFEGKTVEV…NSFSLTGEII (63 aa)).

It belongs to the methylthiotransferase family. MiaB subfamily. As to quaternary structure, monomer. The cofactor is [4Fe-4S] cluster.

Its subcellular location is the cytoplasm. It carries out the reaction N(6)-dimethylallyladenosine(37) in tRNA + (sulfur carrier)-SH + AH2 + 2 S-adenosyl-L-methionine = 2-methylsulfanyl-N(6)-dimethylallyladenosine(37) in tRNA + (sulfur carrier)-H + 5'-deoxyadenosine + L-methionine + A + S-adenosyl-L-homocysteine + 2 H(+). Its function is as follows. Catalyzes the methylthiolation of N6-(dimethylallyl)adenosine (i(6)A), leading to the formation of 2-methylthio-N6-(dimethylallyl)adenosine (ms(2)i(6)A) at position 37 in tRNAs that read codons beginning with uridine. This is tRNA-2-methylthio-N(6)-dimethylallyladenosine synthase from Clostridium novyi (strain NT).